We begin with the raw amino-acid sequence, 494 residues long: Sugar phosphate exchanger 3 (494 aa).

The helical transmembrane segment at 16–36 (FSHHHVVVFLLTFFSYSLLHA) threads the bilayer. Asn58 is a glycosylation site (N-linked (GlcNAc...) asparagine). 5 consecutive transmembrane segments (helical) span residues 81-101 (TLFLGTLDTIFLFSYAVGLFI), 113-133 (WVLSFGMCSSALVVFVFGALT), 147-167 (LWIVNGLLQSTGWPCVVAVMG), 177-197 (VVFGLWSACASVGNILGACLA), and 209-229 (FLVTASVQFAGGIVIFFGLLV). Asn266 carries N-linked (GlcNAc...) asparagine glycosylation. Transmembrane regions (helical) follow at residues 297-317 (LAYACLKLVNYSFFFWLPFYL), 333-353 (IWYDVGGIIGGTLQGFISDVL), 357-377 (APVLALSLLLAVGSLIGYSRS), 386-406 (LLMTVTGFFIGGPSNMISSAI), 428-448 (GIVDGSGSIGAAVGQYLVSLI), and 452-472 (LGWMWVFYFFILMTSCTIVFI).

This sequence belongs to the major facilitator superfamily. Organophosphate:Pi antiporter (OPA) (TC 2.A.1.4) family. Interacts with ATRAID; the interaction is direct and both proteins are mutually dependent for their stability. Glycosylated. In terms of tissue distribution, expressed in liver, kidney, intestine and pancreas.

Its subcellular location is the endoplasmic reticulum membrane. The protein resides in the lysosome membrane. Unlike the other SLC37 members, lacks glucose-6-phosphate antiporter activity. In osteoclasts, forms a transporter complex with ATRAID for nitrogen-containing-bisphophonates (N-BPs) required for releasing N-BP molecules that have trafficked to lysosomes through fluid-phase endocytosis into the cytosol. The protein is Sugar phosphate exchanger 3 of Homo sapiens (Human).